We begin with the raw amino-acid sequence, 159 residues long: Ribosome maturation factor RimP (159 aa).

The protein belongs to the RimP family.

The protein resides in the cytoplasm. Required for maturation of 30S ribosomal subunits. This is Ribosome maturation factor RimP from Streptococcus pneumoniae (strain 70585).